The primary structure comprises 656 residues: Rab proteins geranylgeranyltransferase component A 2 (656 aa).

Disordered regions lie at residues 188-209 and 609-656; these read MHTVSDKDGDKDESKSTVEDKA and PPPN…HLQN. Residues 639-656 are compositionally biased toward basic and acidic residues; that stretch reads ESSEESKNLESPEKHLQN. Position 649 is a phosphoserine (Ser649).

It belongs to the Rab GDI family. In terms of assembly, monomer. Heterotrimer composed of RABGGTA, RABGGTB and CHML; within this trimer, RABGGTA and RABGGTB form the catalytic component B, while CHML (component A) mediates Rab protein binding. Interacts with RAB1A, RAB7A and RAB27A, but has much lower affinity for RAB1A, RAB7A and RAB27A than CHM. Interacts with the non-phosphorylated forms of RAB3A, RAB3B, RAB3C, RAB3D, RAB5B, RAB5C, RAB8A, RAB8B, RAB10, RAB12, RAB35, and RAB43.

It is found in the cytoplasm. The protein resides in the cytosol. Substrate-binding subunit (component A) of the Rab geranylgeranyltransferase (GGTase) complex. Binds unprenylated Rab proteins and presents the substrate peptide to the catalytic component B. The component A is thought to be regenerated by transferring its prenylated Rab back to the donor membrane. Less effective than CHM in supporting prenylation of Rab3 family. In Homo sapiens (Human), this protein is Rab proteins geranylgeranyltransferase component A 2 (CHML).